Consider the following 204-residue polypeptide: Molybdenum cofactor guanylyltransferase (204 aa).

Residues 12–14 (LAG), Lys25, Asn53, Asp71, and Asp101 contribute to the GTP site. A Mg(2+)-binding site is contributed by Asp101.

It belongs to the MobA family. In terms of assembly, monomer. It depends on Mg(2+) as a cofactor.

It is found in the cytoplasm. The enzyme catalyses Mo-molybdopterin + GTP + H(+) = Mo-molybdopterin guanine dinucleotide + diphosphate. Functionally, transfers a GMP moiety from GTP to Mo-molybdopterin (Mo-MPT) cofactor (Moco or molybdenum cofactor) to form Mo-molybdopterin guanine dinucleotide (Mo-MGD) cofactor. The protein is Molybdenum cofactor guanylyltransferase of Ralstonia nicotianae (strain ATCC BAA-1114 / GMI1000) (Ralstonia solanacearum).